The primary structure comprises 247 residues: Fibroblast growth factor 14 (247 aa).

2 disordered regions span residues 1 to 38 (MAAA…KNRG) and 216 to 247 (ETVP…CKTT). Positions 15 to 25 (QAREQHWDRPS) are enriched in basic and acidic residues.

It belongs to the heparin-binding growth factors family. As to quaternary structure, interacts with SCN8A.

The protein localises to the nucleus. Its function is as follows. Probably involved in nervous system development and function. The chain is Fibroblast growth factor 14 (Fgf14) from Rattus norvegicus (Rat).